Consider the following 160-residue polypeptide: Biogenesis of lysosome-related organelles complex 1 subunit 5 (160 aa).

The protein belongs to the BLOC1S5 family. In terms of assembly, component of the biogenesis of lysosome-related organelles complex-1 (BLOC-1) composed of Blos1, Blos2, Blos3, Blos4, Dysb, Muted, Pldn and Snapin.

Functionally, component of the biogenesis of lysosome-related organelles complex-1 (BLOC-1) involved in pigment granule biogenesis. The polypeptide is Biogenesis of lysosome-related organelles complex 1 subunit 5 (Drosophila melanogaster (Fruit fly)).